Reading from the N-terminus, the 405-residue chain is Secreted aspartic protease 8 (405 aa).

Residues 1–25 (MVSIITFTKNVLVTLAFALLAQGLA) form the signal peptide. Residue Asn-50 is glycosylated (N-linked (GlcNAc...) asparagine). The tract at residues 52 to 78 (TAHGQHHQSQQQQQQQQQQPAQKRGTV) is disordered. Low complexity predominate over residues 58 to 70 (HQSQQQQQQQQQQ). In terms of domain architecture, Peptidase A1 spans 89 to 392 (YAATITVGSN…DLDGNTISLA (304 aa)). The active site involves Asp-107. Pepstatin A is bound at residue 107–109 (DTG). Cysteines 122 and 134 form a disulfide. Asp-292 is a catalytic residue. A pepstatin A-binding site is contributed by 292–296 (DSGTT). A disulfide bond links Cys-327 and Cys-358.

This sequence belongs to the peptidase A1 family. As to quaternary structure, monomer.

It localises to the secreted. The enzyme catalyses Preferential cleavage at the carboxyl of hydrophobic amino acids, but fails to cleave 15-Leu-|-Tyr-16, 16-Tyr-|-Leu-17 and 24-Phe-|-Phe-25 of insulin B chain. Activates trypsinogen, and degrades keratin.. Its function is as follows. Secreted aspartic peptidases (SAPs) are a group of ten acidic hydrolases considered as key virulence factors. These enzymes supply the fungus with nutrient amino acids as well as are able to degrade the selected host's proteins involved in the immune defense. Moreover, acts toward human hemoglobin though limited proteolysis to generate a variety of antimicrobial hemocidins, enabling to compete with the other microorganisms of the same physiological niche using the microbicidal peptides generated from the host protein. Plays a key role in defense against host by cleaving histatin-5 (Hst 5), a peptide from human saliva that carries out fungicidal activity. The cleavage rate decreases in an order of SAP2 &gt; SAP9 &gt; SAP3 &gt; SAP7 &gt; SAP4 &gt; SAP1 &gt; SAP8. The hydrolysis of Hst 5 by SAP8 causes production of the DSHAKRHHGY, HHSHRGY and FHEKHHSHRGY peptides. This Candida albicans (Yeast) protein is Secreted aspartic protease 8.